Consider the following 463-residue polypeptide: Chromogranin-A (463 aa).

A signal peptide spans 1–18; it reads MRSTAVLALLLCAGQVFA. A disulfide bridge links C35 with C56. The segment at 88 to 440 is disordered; sequence KERAQQPLKQ…ANRRAEDQEL (353 aa). A compositionally biased stretch (low complexity) spans 92–116; it reads QQPLKQQQPPKQQQQQQQQQQQEQQ. Residue S119 is modified to Phosphoserine. Positions 134–160 are enriched in basic and acidic residues; that stretch reads DAKHRDAAAEVPSRDTMEKRKDSDKGQ. Polar residues predominate over residues 196-208; that stretch reads TATNTQSPTSLPS. Residues S220, S282, and S308 each carry the phosphoserine modification. The span at 301 to 310 shows a compositional bias: basic and acidic residues; the sequence is GKGELEHSQQ. G329 carries the glycine amide modification. Composition is skewed to basic and acidic residues over residues 331–340 and 348–375; these read KGRELEHKQE and RLSREWEDKRWSRMDQLAKELTAEKRLE. Phosphoserine is present on residues S350 and S383. M384 bears the Methionine sulfoxide mark. Residues 409-437 show a composition bias toward basic and acidic residues; it reads SSREDSVEARSDFEEKKEEEGSANRRAED. S410, S414, and S430 each carry phosphoserine. S430 carries O-linked (Xyl...) (chondroitin sulfate) serine glycosylation. Q438 bears the Pyrrolidone carboxylic acid mark. S444 carries the post-translational modification Phosphoserine.

It belongs to the chromogranin/secretogranin protein family. As to quaternary structure, self-interacts; self-assembly is promoted in vitro by chondroitin sulfate attachment which occurs at mildly acidic pH conditions. Interacts with SCG3; this interaction is optimal in conditions mimicking the lumenal milieu of the trans-Golgi network, i.e. pH 5.5 and 10 mM Ca(+2). Interacts with ITPR1 in the secretory granules. In terms of processing, O-glycosylated; contains chondroitin sulfate (CS). CS attachment is pH-dependent, being observed at mildly acidic conditions of pH 5 but not at neutral pH, and promotes self-assembly in vitro.

It is found in the cytoplasmic vesicle. The protein localises to the secretory vesicle. It localises to the neuronal dense core vesicle. The protein resides in the secreted. Functionally, strongly inhibits glucose induced insulin release from the pancreas. In terms of biological role, inhibits catecholamine release from chromaffin cells and noradrenergic neurons by acting as a non-competitive nicotinic cholinergic antagonist. Can induce mast cell migration, degranulation and production of cytokines and chemokines. Its function is as follows. Regulates granule biogenesis in endocrine cells by up-regulating the transcription of protease nexin 1 (SERPINE2) via a cAMP-PKA-SP1 pathway. This leads to inhibition of granule protein degradation in the Golgi complex which in turn promotes granule formation. Pyroglutaminated (pGlu)-serpinin exerts an antiapoptotic effect on cells exposed to oxidative stress. This Mus musculus (Mouse) protein is Chromogranin-A (Chga).